The following is a 559-amino-acid chain: 3-phosphoinositide-dependent protein kinase 1 (559 aa).

Tyr-9 bears the Phosphotyrosine; by SRC and INSR mark. Ser-25 is modified (phosphoserine). Positions 25 to 83 are disordered; it reads SPSMVRSQTEPSSSPGIPSGVSRQGSTMDGTTAEARPSTNPLQQHPAQLPPQPRKKRPE. The segment covering 35–46 has biased composition (low complexity); it reads PSSSPGIPSGVS. Residues 85-345 enclose the Protein kinase domain; the sequence is FKFGKILGEG…YGPLKAHPFF (261 aa). ATP-binding positions include 95-97 and Lys-114; that span reads SFS. The interval 116 to 160 is PIF-pocket; sequence LEKRHIIKENKVPYVTRERDVMSRLDHPFFVKLYFTFQDDEKLYF. ATP is bound by residues 163–165 and Glu-169; that span reads SYA. Asp-208 acts as the Proton acceptor in catalysis. Glu-212 and Asp-226 together coordinate ATP. Ser-244 is modified (phosphoserine). Lys-307 is modified (N6-acetyllysine). Thr-357 carries the post-translational modification Phosphothreonine; by MELK. 2 positions are modified to phosphotyrosine; by SRC and INSR: Tyr-376 and Tyr-379. A Phosphoserine modification is found at Ser-396. At Ser-397 the chain carries Phosphoserine; by MAP3K5. A Phosphoserine modification is found at Ser-399. Ser-401 carries the post-translational modification Phosphoserine; by MAP3K5. Position 413 is a phosphoserine (Ser-413). Residues 462–553 form the PH domain; that stretch reads KMGPVDKRKG…EVWRQQYQSS (92 aa). A Phosphoserine; by PKC/PRKCQ modification is found at Ser-504. Thr-516 bears the Phosphothreonine; by autocatalysis mark. Position 532 is a phosphoserine; by PKC/PRKCQ (Ser-532).

Belongs to the protein kinase superfamily. AGC Ser/Thr protein kinase family. PDPK1 subfamily. In terms of assembly, homodimer in its autoinhibited state. Active as monomer. Interacts with NPRL2, PPARG, PAK1, PTK2B, GRB14, PKN1 (via C-terminus), STRAP and IKKB. The Tyr-9 phosphorylated form interacts with SRC, RASA1 and CRK (via their SH2 domains). Interacts with SGK3 in a phosphorylation-dependent manner. The tyrosine-phosphorylated form interacts with PTPN6. The Ser-244 phosphorylated form interacts with YWHAH and YWHAQ. Binds INSR in response to insulin. Interacts (via PH domain) with SMAD3, SMAD4 and SMAD7. Interacts with PKN2; the interaction stimulates PDPK1 autophosphorylation, its PI(3,4,5)P3-dependent kinase activity toward 'Ser-473' of AKT1 but also activates its kinase activity toward PRKCD and PRKCZ. In terms of processing, phosphorylation on Ser-244 in the activation loop is required for full activity. PDPK1 itself can autophosphorylate Ser-244, leading to its own activation. Autophosphorylation is inhibited by the apoptotic C-terminus cleavage product of PKN2. Tyr-9 phosphorylation is critical for stabilization of both PDPK1 and the PDPK1/SRC complex via HSP90-mediated protection of PDPK1 degradation. Angiotensin II stimulates the tyrosine phosphorylation of PDPK1 in vascular smooth muscle in a calcium- and SRC-dependent manner. Phosphorylated on Tyr-9, Tyr-376 and Tyr-379 by INSR in response to insulin. Palmitate negatively regulates autophosphorylation at Ser-244 and palmitate-induced phosphorylation at Ser-532 and Ser-504 by PKC/PRKCQ negatively regulates its ability to phosphorylate PKB/AKT1. Phosphorylation at Thr-357 by MELK partially inhibits kinase activity, the inhibition is cooperatively enhanced by phosphorylation at Ser-397 and Ser-401 by MAP3K5. Post-translationally, monoubiquitinated in the kinase domain, deubiquitinated by USP4.

The protein localises to the cytoplasm. The protein resides in the nucleus. Its subcellular location is the cell membrane. It localises to the cell junction. It is found in the focal adhesion. The catalysed reaction is L-seryl-[protein] + ATP = O-phospho-L-seryl-[protein] + ADP + H(+). The enzyme catalyses L-threonyl-[protein] + ATP = O-phospho-L-threonyl-[protein] + ADP + H(+). Its activity is regulated as follows. Homodimerization regulates its activity by maintaining the kinase in an autoinhibitory conformation. NPRL2 down-regulates its activity by interfering with tyrosine phosphorylation at the Tyr-9, Tyr-376 and Tyr-379 residues. The 14-3-3 protein YWHAQ acts as a negative regulator by association with the residues surrounding the Ser-244 residue. STRAP positively regulates its activity by enhancing its autophosphorylation and by stimulating its dissociation from YWHAQ. SMAD2, SMAD3, SMAD4 and SMAD7 also positively regulate its activity by stimulating its dissociation from YWHAQ. Activated by phosphorylation on Tyr-9, Tyr-376 and Tyr-379 by INSR in response to insulin. Its function is as follows. Serine/threonine kinase which acts as a master kinase, phosphorylating and activating a subgroup of the AGC family of protein kinases. Its targets include: protein kinase B (PKB/AKT1, PKB/AKT2, PKB/AKT3), p70 ribosomal protein S6 kinase (RPS6KB1), p90 ribosomal protein S6 kinase (RPS6KA1, RPS6KA2 and RPS6KA3), cyclic AMP-dependent protein kinase (PRKACA), protein kinase C (PRKCD and PRKCZ), serum and glucocorticoid-inducible kinase (SGK1, SGK2 and SGK3), p21-activated kinase-1 (PAK1), TSSK3, protein kinase PKN (PKN1 and PKN2). Plays a central role in the transduction of signals from insulin by providing the activating phosphorylation to PKB/AKT1, thus propagating the signal to downstream targets controlling cell proliferation and survival, as well as glucose and amino acid uptake and storage. Negatively regulates the TGF-beta-induced signaling by: modulating the association of SMAD3 and SMAD7 with TGF-beta receptor, phosphorylating SMAD2, SMAD3, SMAD4 and SMAD7, preventing the nuclear translocation of SMAD3 and SMAD4 and the translocation of SMAD7 from the nucleus to the cytoplasm in response to TGF-beta. Activates PPARG transcriptional activity and promotes adipocyte differentiation. Activates the NF-kappa-B pathway via phosphorylation of IKKB. The tyrosine phosphorylated form is crucial for the regulation of focal adhesions by angiotensin II. Controls proliferation, survival, and growth of developing pancreatic cells. Participates in the regulation of Ca(2+) entry and Ca(2+)-activated K(+) channels of mast cells. Essential for the motility of vascular endothelial cells (ECs) and is involved in the regulation of their chemotaxis. Plays a critical role in cardiac homeostasis by serving as a dual effector for cell survival and beta-adrenergic response. Plays an important role during thymocyte development by regulating the expression of key nutrient receptors on the surface of pre-T cells and mediating Notch-induced cell growth and proliferative responses. Provides negative feedback inhibition to toll-like receptor-mediated NF-kappa-B activation in macrophages. The polypeptide is 3-phosphoinositide-dependent protein kinase 1 (Pdpk1) (Rattus norvegicus (Rat)).